Consider the following 300-residue polypeptide: Acetylglutamate kinase (300 aa).

Substrate-binding positions include 69–70, Arg91, and Asn197; that span reads GG.

This sequence belongs to the acetylglutamate kinase family. ArgB subfamily.

The protein localises to the cytoplasm. The catalysed reaction is N-acetyl-L-glutamate + ATP = N-acetyl-L-glutamyl 5-phosphate + ADP. Its pathway is amino-acid biosynthesis; L-arginine biosynthesis; N(2)-acetyl-L-ornithine from L-glutamate: step 2/4. Functionally, catalyzes the ATP-dependent phosphorylation of N-acetyl-L-glutamate. This chain is Acetylglutamate kinase, found in Kineococcus radiotolerans (strain ATCC BAA-149 / DSM 14245 / SRS30216).